Here is a 286-residue protein sequence, read N- to C-terminus: ATP synthase gamma chain (286 aa).

It belongs to the ATPase gamma chain family. F-type ATPases have 2 components, CF(1) - the catalytic core - and CF(0) - the membrane proton channel. CF(1) has five subunits: alpha(3), beta(3), gamma(1), delta(1), epsilon(1). CF(0) has three main subunits: a, b and c.

It localises to the cell membrane. In terms of biological role, produces ATP from ADP in the presence of a proton gradient across the membrane. The gamma chain is believed to be important in regulating ATPase activity and the flow of protons through the CF(0) complex. The sequence is that of ATP synthase gamma chain from Bacillus mycoides (strain KBAB4) (Bacillus weihenstephanensis).